A 287-amino-acid polypeptide reads, in one-letter code: Lactamase-like protein nscB (287 aa).

The Zn(2+) site is built by histidine 62, histidine 64, aspartate 66, and histidine 67. Aspartate 66 acts as the Proton donor/acceptor in catalysis.

This sequence belongs to the metallo-beta-lactamase superfamily. The cofactor is Zn(2+).

It functions in the pathway secondary metabolite biosynthesis. Functionally, lactamase-like protein; part of the gene cluster that mediates the biosynthesis of neosartoricin B, a prenylated anthracenone that probably exhibits T-cell antiproliferative activity, suggestive of a physiological role as an immunosuppressive agent. The non-reducing polyketide synthase nscA probably synthesizes and cyclizes the decaketide backbone. The hydrolase nscB then mediates the product release through hydrolysis followed by spontaneous decarboxylation. The prenyltransferase nscD catalyzes the addition of the dimethylallyl group to the aromatic C5. The FAD-dependent monooxygenase nscC is then responsible for the stereospecific hydroxylation at C2. Neosartoricin B can be converted into two additional compounds neosartoricins C and D. Neosartoricin C is a spirocyclic compound that is cyclized through the attack of C3 hydroxyl on C14, followed by dehydration. On the other hand, neosartoricin D is a further cyclized compound in which attack of C2 on C14 in neosartoricin C results in the formation of the acetal-containing dioxabicyclo-octanone ring. Both of these compounds are novel and possibly represent related metabolites of the gene cluster. The polypeptide is Lactamase-like protein nscB (Trichophyton verrucosum (strain HKI 0517)).